Reading from the N-terminus, the 376-residue chain is MASYTSTSGQFAVGKVAAANQDDETCMHALKLLGGLAVPFTIKAVIELGIMDLLLAADRAMTAEALTAALLCPAPAPAAAAAMVDRMLRFLASHGVVRCATESEELGSDDGKSCRRYAAAPVCKWFARGGGVESVVPMGFWMTSTTNMETWHNIKDGVLAGETPFDKAYGMPVFEYLGANGTMNTLFNEAMASHSMIITKRLLEVFRGFENYSVLVDVGGGNGTTMQMIRSQYENISGINYDLPHVIAQASPIEGVEHVAGNMFDNIPRGDAIILKWILHNWGDKECVKILKNCYTALPVNGTVIILEYILPETPEETLASQLAFDFDLGMMLFFGASGKERTEKELLELAREAGFSGDYTATYIFANVWAHEFTK.

Residues glycine 219, aspartate 242, methionine 263, and lysine 276 each coordinate S-adenosyl-L-methionine. The active-site Proton acceptor is the histidine 280.

Belongs to the class I-like SAM-binding methyltransferase superfamily. Cation-independent O-methyltransferase family. COMT subfamily. Homodimer. Expressed predominantly in root hairs.

It catalyses the reaction (E)-isoeugenol + S-adenosyl-L-methionine = (E)-isomethyleugenol + S-adenosyl-L-homocysteine + H(+). Its function is as follows. O-methyltransferase. Substrate preference is eugenol &gt;&gt; orcinol monomethyl ether &gt; resorcinol monomethyl ether. This is Eugenol O-methyltransferase (EOMT) from Sorghum bicolor (Sorghum).